Consider the following 165-residue polypeptide: UPF0303 protein Bphy_1660 (165 aa).

Belongs to the UPF0303 family.

This is UPF0303 protein Bphy_1660 from Paraburkholderia phymatum (strain DSM 17167 / CIP 108236 / LMG 21445 / STM815) (Burkholderia phymatum).